A 455-amino-acid chain; its full sequence is Phosphoglucosamine mutase (455 aa).

The Phosphoserine intermediate role is filled by Ser104. Mg(2+) contacts are provided by Ser104, Asp253, Asp255, and Asp257. Phosphoserine is present on Ser104.

Belongs to the phosphohexose mutase family. Mg(2+) is required as a cofactor. In terms of processing, activated by phosphorylation.

The enzyme catalyses alpha-D-glucosamine 1-phosphate = D-glucosamine 6-phosphate. In terms of biological role, catalyzes the conversion of glucosamine-6-phosphate to glucosamine-1-phosphate. This is Phosphoglucosamine mutase from Psychrobacter arcticus (strain DSM 17307 / VKM B-2377 / 273-4).